Here is a 336-residue protein sequence, read N- to C-terminus: P2Y purinoceptor 13 (336 aa).

At 1-32 (MLGTVNTTGMQGFNKSERCPRDTRMTQLLFPV) the chain is on the extracellular side. Residues asparagine 6 and asparagine 14 are each glycosylated (N-linked (GlcNAc...) asparagine). Residues 33 to 53 (LYTVVFFTGVLLNTLALWVFI) form a helical membrane-spanning segment. The Cytoplasmic segment spans residues 54-60 (HIPSNST). Residues 61-81 (FIIYLKNTLVADLIMTLMLPF) traverse the membrane as a helical segment. Over 82–100 (KILSDSRLAPWQLRGFVCT) the chain is Extracellular. Residues cysteine 99 and cysteine 176 are joined by a disulfide bond. A helical transmembrane segment spans residues 101-121 (FSSVVFYETMYVGIMMLGLIA). Over 122–144 (FDRFLKIVVPFRKTFVKKTAFAK) the chain is Cytoplasmic. A helical transmembrane segment spans residues 145-165 (IVSISIWLLMFLISLPNMILN). Residues 166 to 193 (KEATASTVKKCASLKSPLGLLWHQVVSH) are Extracellular-facing. The chain crosses the membrane as a helical span at residues 194-214 (TCQFIFWTVFILMLLFYTVIA). Over 215 to 237 (KKVYDSYRKFKSRDSKHKRLEAK) the chain is Cytoplasmic. A helical membrane pass occupies residues 238–258 (VFIVMAVFFVCFAPFHFVRVP). The Extracellular portion of the chain corresponds to 259 to 281 (YTHSQTTNKTDCRLENQLFLAKE). Residue asparagine 266 is glycosylated (N-linked (GlcNAc...) asparagine). Residues 282-302 (STLFLATTNICMDPLIYIILC) traverse the membrane as a helical segment. The Cytoplasmic segment spans residues 303–336 (KKFTRKVPCMRWRTKTAASSDEHHSSQTDNITLS).

The protein belongs to the G-protein coupled receptor 1 family. In terms of tissue distribution, highest levels in spleen, liver brain and kidney. Lower but significant level are also detected in intestine, stomach, skeletal muscle, testis, heart and lung.

It localises to the cell membrane. Its function is as follows. Receptor for ADP. Coupled to G(i)-proteins. May play a role in hematopoiesis and the immune system. This chain is P2Y purinoceptor 13 (P2ry13), found in Rattus norvegicus (Rat).